A 34-amino-acid chain; its full sequence is Egg-releasing peptide (34 aa).

In Aplysia californica (California sea hare), this protein is Egg-releasing peptide.